The chain runs to 445 residues: MGRLFGTDGVRGVANRELTAELALALGAATAQHLASSTGPGRRVAVVGRDPRASGEMLEAAVIAGLTSQGVDALRVGVLPTPAVAYLTGAYDADFGVMISASHNPMPDNGIKIFGPGGHKLDDATENRIESLVAAGPGLRPVGSEIGRVIDAEDAADRYLRHVSKACTTRLDGLTVVVDCAHGAASEVGPRAYRAAGARVIEINADPNGLNINDDCGSTHLEAIRAAVLAHGADLGVAHDGDADRCLAVDANGDLVDGDAIMVVLALAMQEAGELASDTLVTTVMSNLGLHLAMREAGVNVRTTGVGDRYVLEELRAGDYSLGGEQSGHIVMPGLGSTGDGIVTGLRLMTRMVATGASLAALASRMQTLPQVLINVQVTDKATAAAAPSVQAAVDRAETELGDTGRILLRPSGTEPLIRVMVEAADEEAAHRLATSVADAVSAAG.

Residue Ser-102 is the Phosphoserine intermediate of the active site. Mg(2+)-binding residues include Ser-102, Asp-240, Asp-242, and Asp-244. Position 102 is a phosphoserine (Ser-102).

This sequence belongs to the phosphohexose mutase family. Mg(2+) is required as a cofactor. Post-translationally, activated by phosphorylation.

It carries out the reaction alpha-D-glucosamine 1-phosphate = D-glucosamine 6-phosphate. Functionally, catalyzes the conversion of glucosamine-6-phosphate to glucosamine-1-phosphate. The sequence is that of Phosphoglucosamine mutase from Mycobacterium ulcerans (strain Agy99).